Consider the following 203-residue polypeptide: A-type ATP synthase subunit E (203 aa).

This sequence belongs to the V-ATPase E subunit family. As to quaternary structure, has multiple subunits with at least A(3), B(3), C, D, E, F, H, I and proteolipid K(x).

It is found in the cell membrane. Component of the A-type ATP synthase that produces ATP from ADP in the presence of a proton gradient across the membrane. The polypeptide is A-type ATP synthase subunit E (Thermococcus sibiricus (strain DSM 12597 / MM 739)).